Consider the following 465-residue polypeptide: Protein unc-93 homolog A (465 aa).

The next 5 membrane-spanning stretches (helical) occupy residues 8–28, 40–60, 71–91, 96–118, and 140–160; these read VLVV…LQSL, VISL…LPPI, IVVS…PGWA, TSAI…LTIS, and IFFF…SLIF. Asn-183 and Asn-189 each carry an N-linked (GlcNAc...) asparagine glycan. The helical transmembrane segment at 200-220 threads the bilayer; the sequence is TLLGCYIGVGLLAIIFVAVFL. The N-linked (GlcNAc...) asparagine glycan is linked to Asn-237. Helical transmembrane passes span 256-276, 281-301, 319-339, 343-363, and 410-427; these read LLLL…LSGE, YVTC…FAAS, IALF…LLYW, PDQL…DAVW, and IYIA…YLYV.

It belongs to the unc-93 family.

It is found in the membrane. This Danio rerio (Zebrafish) protein is Protein unc-93 homolog A (unc93a).